The chain runs to 401 residues: Multidrug resistance protein MdtH (401 aa).

11 helical membrane passes run 13–33 (YFLL…FPLI), 34–54 (SIHF…ALGL), 78–95 (MIVT…FIAL), 99–116 (PWIL…GTLF), 139–159 (LLLM…SWLL), 165–185 (FVCW…ALFL), 214–234 (VLTL…FPII), 243–263 (AAVK…LYPI), 289–309 (FPVG…LFYL), 340–360 (LGLA…YDTG), and 365–385 (IPQL…YALH).

Belongs to the major facilitator superfamily. DHA1 family. MdtH (TC 2.A.1.2.21) subfamily.

It localises to the cell inner membrane. The chain is Multidrug resistance protein MdtH from Photorhabdus laumondii subsp. laumondii (strain DSM 15139 / CIP 105565 / TT01) (Photorhabdus luminescens subsp. laumondii).